A 136-amino-acid polypeptide reads, in one-letter code: Cell division protein SepF 3 (136 aa).

The protein belongs to the SepF family. In terms of assembly, homodimer. Interacts with FtsZ.

It localises to the cytoplasm. Its function is as follows. Cell division protein that is part of the divisome complex and is recruited early to the Z-ring. Probably stimulates Z-ring formation, perhaps through the cross-linking of FtsZ protofilaments. Its function overlaps with FtsA. In Streptomyces coelicolor (strain ATCC BAA-471 / A3(2) / M145), this protein is Cell division protein SepF 3.